The primary structure comprises 223 residues: Deoxyribose-phosphate aldolase (223 aa).

Aspartate 91 (proton donor/acceptor) is an active-site residue. Lysine 153 serves as the catalytic Schiff-base intermediate with acetaldehyde. Residue lysine 182 is the Proton donor/acceptor of the active site.

It belongs to the DeoC/FbaB aldolase family. DeoC type 1 subfamily.

The protein localises to the cytoplasm. The catalysed reaction is 2-deoxy-D-ribose 5-phosphate = D-glyceraldehyde 3-phosphate + acetaldehyde. The protein operates within carbohydrate degradation; 2-deoxy-D-ribose 1-phosphate degradation; D-glyceraldehyde 3-phosphate and acetaldehyde from 2-deoxy-alpha-D-ribose 1-phosphate: step 2/2. Functionally, catalyzes a reversible aldol reaction between acetaldehyde and D-glyceraldehyde 3-phosphate to generate 2-deoxy-D-ribose 5-phosphate. This Streptococcus pyogenes serotype M12 (strain MGAS2096) protein is Deoxyribose-phosphate aldolase.